Consider the following 250-residue polypeptide: Probable aquaporin TIP1-1 (250 aa).

A run of 2 helical transmembrane segments spans residues 25 to 44 and 58 to 77; these read AEFI…GMAF and LIAA…SVGA. The NPA 1 motif lies at 85-87; it reads NPA. Transmembrane regions (helical) follow at residues 103–121, 144–163, and 170–192; these read GLLY…CFLL, LVLE…ATAV, and LGTI…GGAF. The NPA 2 signature appears at 198-200; that stretch reads NPA. Residues 216–233 traverse the membrane as a helical segment; sequence WVYWVGPLIGGGLAGVIY.

It belongs to the MIP/aquaporin (TC 1.A.8) family. TIP (TC 1.A.8.10) subfamily. Expressed in roots and leaves.

It localises to the vacuole membrane. Aquaporins facilitate the transport of water and small neutral solutes across cell membranes. May be involved in transport from the vacuolar compartment to the cytoplasm. The chain is Probable aquaporin TIP1-1 (TIP1-1) from Oryza sativa subsp. japonica (Rice).